The primary structure comprises 364 residues: Methylthioribose-1-phosphate isomerase (364 aa).

Catalysis depends on Asp-254, which acts as the Proton donor.

It belongs to the eIF-2B alpha/beta/delta subunits family. MtnA subfamily.

Its subcellular location is the cytoplasm. It is found in the nucleus. It carries out the reaction 5-(methylsulfanyl)-alpha-D-ribose 1-phosphate = 5-(methylsulfanyl)-D-ribulose 1-phosphate. It participates in amino-acid biosynthesis; L-methionine biosynthesis via salvage pathway; L-methionine from S-methyl-5-thio-alpha-D-ribose 1-phosphate: step 1/6. Functionally, catalyzes the interconversion of methylthioribose-1-phosphate (MTR-1-P) into methylthioribulose-1-phosphate (MTRu-1-P). The chain is Methylthioribose-1-phosphate isomerase from Drosophila erecta (Fruit fly).